The following is a 406-amino-acid chain: Mitochondrial ribosome-associated GTPase 2 (406 aa).

Residues 15–406 (FQGVGHWALS…LGQGRQPLRW (392 aa)) are localized in the mitochondria. The tract at residues 30 to 406 (KPSRLLPQRA…LGQGRQPLRW (377 aa)) is not localized in the mitochondria. Residues 70–224 (RYFVDYRRVL…RVLHLELKTV (155 aa)) enclose the Obg domain. Residues 225-390 (AHAGMVGFPN…LLLHLKVLYD (166 aa)) form the OBG-type G domain. GTP is bound by residues 231 to 238 (GFPNAGKS), 256 to 260 (FTTLK), 278 to 281 (DIPG), 345 to 348 (NKID), and 371 to 373 (SAL). Ser238 and Thr258 together coordinate Mg(2+).

This sequence belongs to the TRAFAC class OBG-HflX-like GTPase superfamily. OBG GTPase family. Associates with the mitochondrial ribosome large subunit; the association occurs in a GTP-dependent manner. It depends on Mg(2+) as a cofactor.

Its subcellular location is the mitochondrion. The protein resides in the mitochondrion inner membrane. Functionally, plays a role in the regulation of the mitochondrial ribosome assembly and of translational activity. Displays GTPase activity. Involved in the ribosome maturation process. This is Mitochondrial ribosome-associated GTPase 2 (MTG2) from Homo sapiens (Human).